Here is a 361-residue protein sequence, read N- to C-terminus: Peptide chain release factor 1 (361 aa).

Gln235 carries the N5-methylglutamine modification. The tract at residues 287–309 is disordered; it reads QKEASAMRSAQVGSGDRSERIRT.

Belongs to the prokaryotic/mitochondrial release factor family. Methylated by PrmC. Methylation increases the termination efficiency of RF1.

Its subcellular location is the cytoplasm. In terms of biological role, peptide chain release factor 1 directs the termination of translation in response to the peptide chain termination codons UAG and UAA. The polypeptide is Peptide chain release factor 1 (Chlamydia caviae (strain ATCC VR-813 / DSM 19441 / 03DC25 / GPIC) (Chlamydophila caviae)).